The sequence spans 181 residues: Oligoribonuclease (181 aa).

Residues 8 to 171 enclose the Exonuclease domain; that stretch reads LIWIDLEMTG…DDIRESIAEL (164 aa). Y129 is a catalytic residue.

Belongs to the oligoribonuclease family.

The protein resides in the cytoplasm. 3'-to-5' exoribonuclease specific for small oligoribonucleotides. The protein is Oligoribonuclease of Vibrio vulnificus (strain CMCP6).